The following is a 148-amino-acid chain: Putative ankyrin repeat protein RF_1158 (148 aa).

The ANK repeat unit spans residues 82–115; the sequence is RPTTALGIAIAQGNSEEVIKYLLANGADPKLAFD.

The sequence is that of Putative ankyrin repeat protein RF_1158 from Rickettsia felis (strain ATCC VR-1525 / URRWXCal2) (Rickettsia azadi).